A 467-amino-acid chain; its full sequence is Tubulointerstitial nephritis antigen-like (467 aa).

The N-terminal stretch at 1–21 (MWGCPLGLLLLLLAGQAALEA) is a signal peptide. The region spanning 49–96 (EQDMCCRGRADECALPYLGATCYCDLFCNRTVSDCCPDFWDFCLGIPP) is the SMB domain. Cystine bridges form between Cys-53–Cys-72, Cys-70–Cys-72, Cys-70–Cys-84, Cys-76–Cys-83, and Cys-84–Cys-91. N-linked (GlcNAc...) asparagine glycosylation occurs at Asn-77. N-linked (GlcNAc...) asparagine glycosylation is present at Asn-160.

It belongs to the peptidase C1 family. Post-translationally, glycosylated.

It localises to the secreted. Its function is as follows. May be implicated in the adrenocortical zonation and in mechanisms for repressing the CYP11B1 gene expression in adrenocortical cells. This is a non catalytic peptidase C1 family protein. The chain is Tubulointerstitial nephritis antigen-like (Tinagl1) from Rattus norvegicus (Rat).